The following is a 207-amino-acid chain: Ras-related protein RABH1e (207 aa).

GTP is bound at residue 16–23; sequence GDQSVGKT. Residues 38 to 46 carry the Effector region motif; sequence YQATIGIDF. Residues 64–68, 122–125, and 152–153 each bind GTP; these read DTAGQ, NKTD, and SA. S-geranylgeranyl cysteine attachment occurs at residues cysteine 205 and cysteine 207. Cysteine 207 carries the post-translational modification Cysteine methyl ester.

Belongs to the small GTPase superfamily. Rab family.

Its subcellular location is the golgi apparatus membrane. Its function is as follows. Protein transport. Regulator of membrane traffic from the Golgi apparatus towards the endoplasmic reticulum (ER). In Arabidopsis thaliana (Mouse-ear cress), this protein is Ras-related protein RABH1e (RABH1E).